The primary structure comprises 102 residues: Small ribosomal subunit protein uS10 (102 aa).

It belongs to the universal ribosomal protein uS10 family. In terms of assembly, part of the 30S ribosomal subunit.

In terms of biological role, involved in the binding of tRNA to the ribosomes. The polypeptide is Small ribosomal subunit protein uS10 (Paramagnetospirillum magneticum (strain ATCC 700264 / AMB-1) (Magnetospirillum magneticum)).